The following is a 330-amino-acid chain: Protein C10 (330 aa).

It belongs to the poxviridae C4/C10 protein family.

This is Protein C10 from Homo sapiens (Human).